Here is a 738-residue protein sequence, read N- to C-terminus: RNA polymerase II degradation factor 1 (738 aa).

In terms of domain architecture, CUE spans 21–63; the sequence is ALKSKIDTLTELFPDWTSDDLIDIVQEYDDLETIIDKITSGAV. The segment covering 69–84 has biased composition (basic and acidic residues); sequence VKKPAKKEKYEKKEQQ. Disordered regions lie at residues 69–455, 467–503, and 640–688; these read VKKP…QQQQ, YLSQ…QGNN, and NGQE…QPVN. Residues 103–121 show a composition bias toward low complexity; that stretch reads KSSNNSNSFTSTKHNSSNN. The span at 211 to 220 shows a compositional bias: basic and acidic residues; it reads HNNKEEHKQI. Over residues 224-237 the composition is skewed to low complexity; sequence SLSSKKTTSRTSAS. Residues 256–291 show a composition bias toward basic and acidic residues; the sequence is KKTESPLENVAELKKEISDIKKDDQKSEASEEKVNE. Phosphoserine occurs at positions 260, 273, and 307. Acidic residues-rich tracts occupy residues 298-328 and 337-358; these read EQEE…EAEE and QTAE…EVTV. Threonine 338 bears the Phosphothreonine mark. 2 stretches are compositionally biased toward low complexity: residues 380–455 and 467–498; these read VPQP…QQQQ and YLSQ…PQSQ. Positions 500–530 are contains the proteolytic activation cleavage site; sequence QGNNVAAQQYYMYQNQFPGYSYPGMFDSQGY. Serine 646 bears the Phosphoserine mark. Over residues 660 to 688 the composition is skewed to low complexity; the sequence is QKQSQQQQQQQPQGQPQPEVQMQNGQPVN.

It belongs to the DEF1 family. Homodimer; may form higher order oligomers. Interacts with the large RNA polymerase II subunit RPO21; the interaction is direct and serves to bridge RPO21 to the Elongin complex in a manner dependent on transcription stress. Interacts with RAD26. In terms of processing, ubiquitinated. Post-translationally, proteolytically cleaved by the proteasome in response to transcription stress; the resulting N-terminal form constitutes the activated nuclear form and the C-terminal portion is degraded.

The protein resides in the cytoplasm. The protein localises to the nucleus. It is found in the chromosome. It localises to the telomere. In terms of biological role, recruits the ubiquitination machinery to RNA polymerase II for polyubiquitination, removal and degradation, when the transcription-coupled repair (TCR) factor RAD26 fails to efficiently displace stalled RNA polymerase II. Also involved in telomere length regulation. Binds DNA. The polypeptide is RNA polymerase II degradation factor 1 (DEF1) (Saccharomyces cerevisiae (strain JAY291) (Baker's yeast)).